The sequence spans 61 residues: Alpha-conotoxin-like PnMGMR-02 (61 aa).

Positions 1–21 (MGMRMMFTVFLLVVLATTVVS) are cleaved as a signal peptide. Residues 22–44 (FTSDRASDGGNAAASDLIALTIK) constitute a propeptide that is removed on maturation. Intrachain disulfides connect C46/C52 and C47/C60. The ser-Xaa-Pro motif, crucial for potent interaction with nAChR stretch occupies residues 48 to 50 (SRP). At C60 the chain carries Cysteine amide.

This sequence belongs to the conotoxin A superfamily. In terms of tissue distribution, expressed by the venom duct.

Its subcellular location is the secreted. Its function is as follows. Alpha-conotoxins act on postsynaptic membranes, they bind to the nicotinic acetylcholine receptors (nAChR) and thus inhibit them. This toxin blocks mammalian nAChRs (alpha-7 &gt; alpha-3/beta-2). This is Alpha-conotoxin-like PnMGMR-02 from Conus pennaceus (Feathered cone).